We begin with the raw amino-acid sequence, 689 residues long: Elongation factor G (689 aa).

The tr-type G domain occupies 8-282 (LNTRNIGIMA…AVVDYLPSPL (275 aa)). Residues 17–24 (AHIDAGKT), 81–85 (DTPGH), and 135–138 (NKMD) each bind GTP.

Belongs to the TRAFAC class translation factor GTPase superfamily. Classic translation factor GTPase family. EF-G/EF-2 subfamily.

The protein localises to the cytoplasm. Functionally, catalyzes the GTP-dependent ribosomal translocation step during translation elongation. During this step, the ribosome changes from the pre-translocational (PRE) to the post-translocational (POST) state as the newly formed A-site-bound peptidyl-tRNA and P-site-bound deacylated tRNA move to the P and E sites, respectively. Catalyzes the coordinated movement of the two tRNA molecules, the mRNA and conformational changes in the ribosome. This Mycoplasma mycoides subsp. mycoides SC (strain CCUG 32753 / NCTC 10114 / PG1) protein is Elongation factor G.